We begin with the raw amino-acid sequence, 367 residues long: B2 bradykinin receptor (367 aa).

Topologically, residues Met-1 to Gln-36 are extracellular. N-linked (GlcNAc...) asparagine glycans are attached at residues Asn-3 and Asn-14. Residues Ala-37–Leu-60 traverse the membrane as a helical segment. Residues His-61–Glu-69 lie on the Cytoplasmic side of the membrane. Residues Ile-70–Ala-94 form a helical membrane-spanning segment. The Extracellular portion of the chain corresponds to Asn-95 to Arg-107. A disulfide bond links Cys-106 and Cys-187. Residues Val-108–Ile-129 form a helical membrane-spanning segment. The Cytoplasmic segment spans residues Asp-130–Lys-151. Position 132 is a phosphotyrosine (Tyr-132). The chain crosses the membrane as a helical span at residues Leu-152–Met-174. At His-175–Met-197 the chain is on the extracellular side. Asn-183 is a glycosylation site (N-linked (GlcNAc...) asparagine). Residues Val-198–Leu-224 traverse the membrane as a helical segment. The Cytoplasmic portion of the chain corresponds to Gln-225–Lys-243. A helical transmembrane segment spans residues Ala-244–Leu-268. Residues Asp-269 to Asp-287 are Extracellular-facing. The chain crosses the membrane as a helical span at residues Val-288 to Val-311. At Gly-312–Gln-367 the chain is on the cytoplasmic side. Tyr-323 bears the Phosphotyrosine mark. A lipid anchor (S-palmitoyl cysteine) is attached at Cys-327. At Ser-342 the chain carries Phosphoserine. At Thr-345 the chain carries Phosphothreonine. Residues Ser-349 and Ser-351 each carry the phosphoserine; by GRK6 modification.

Belongs to the G-protein coupled receptor 1 family. Bradykinin receptor subfamily. BDKRB2 sub-subfamily. As to quaternary structure, forms a complex with PECAM1 and GNAQ. Interacts with PECAM1.

It is found in the cell membrane. Functionally, receptor for bradykinin. It is associated with G proteins that activate a phosphatidylinositol-calcium second messenger system. In Sus scrofa (Pig), this protein is B2 bradykinin receptor (BDKRB2).